A 151-amino-acid chain; its full sequence is MMRCVVYSIAKSSPLELVKIYQKQCKQFDCELELVDLFPKNTANAQKVSKELAQKSYSLAFEPYLNPKAKNIALHPKAQRGDSFAFSKMLENHLNINFFIAGAYGFEENFLKGCQAWSLSEMTFSHEVAKIVLCEQIYRALSIIFKHPYHK.

S-adenosyl-L-methionine-binding positions include Ala-101 and 119–124 (LSEMTF).

Belongs to the RNA methyltransferase RlmH family. Homodimer.

The protein resides in the cytoplasm. It carries out the reaction pseudouridine(1915) in 23S rRNA + S-adenosyl-L-methionine = N(3)-methylpseudouridine(1915) in 23S rRNA + S-adenosyl-L-homocysteine + H(+). Specifically methylates the pseudouridine at position 1915 (m3Psi1915) in 23S rRNA. This chain is Ribosomal RNA large subunit methyltransferase H, found in Helicobacter pylori (strain G27).